Reading from the N-terminus, the 1008-residue chain is G protein-regulated inducer of neurite outgrowth 1 (1008 aa).

Residues 1-859 form a disordered region; sequence MDTAEDPAWL…SPPSRRDAGL (859 aa). The residue at position 60 (T60) is a Phosphothreonine. 2 positions are modified to phosphoserine: S64 and S75. The segment covering 117-127 has biased composition (polar residues); sequence ISGTPEATTSG. Basic and acidic residues-rich tracts occupy residues 137 to 159, 167 to 178, 230 to 269, and 279 to 291; these read TEPK…KSSK, GKEDPGSSRKAD, PRKE…HPVS, and EKVD…KRDP. The residue at position 237 (S237) is a Phosphoserine. 2 stretches are compositionally biased toward polar residues: residues 326-336 and 391-406; these read SGKNGPVSSGT and HTDT…TSLK. Phosphoserine is present on residues S436 and S452. Over residues 454 to 466 the composition is skewed to basic and acidic residues; sequence GKEDPVSSRREDP. Positions 481 to 491 are enriched in polar residues; sequence PESSGKTNPVS. Residues 549-559 are compositionally biased toward basic and acidic residues; sequence GKEDPVSKGKA. S615 carries the phosphoserine modification. Positions 643–656 are enriched in low complexity; that stretch reads PGQEGAAAPGEAGA. Basic and acidic residues predominate over residues 659 to 679; the sequence is LKKETPQASEKVDPGSCRKAE. At S737 the chain carries Phosphoserine. Residues 742–752 are compositionally biased toward basic and acidic residues; sequence RGSEGRVEPKA. Polar residues predominate over residues 755 to 764; it reads VSSTEASSLG. S799 bears the Phosphoserine mark. Residues 838 to 847 are compositionally biased toward low complexity; the sequence is SAFSFQAAPR. The residue at position 877 (T877) is a Phosphothreonine. Phosphoserine occurs at positions 895 and 914. Residues 899–1008 form an interaction with GNAO1 region; that stretch reads AAVAPPEPAE…CCSRAGPTAE (110 aa). A disordered region spans residues 943 to 986; sequence ERQIEEHGRQGAPAPPPAARAGPGRSGSVRTAPPDGAAKRPPGL. S993 is subject to Phosphoserine. Residues C999 and C1000 are each lipidated (S-palmitoyl cysteine).

In terms of assembly, interacts with activated forms of GNAI1, GNAO1 and GNAZ. Post-translationally, palmitoylation on Cys-999 and/or Cys-1000 is required for membrane targeting. Widely expressed in the central nervous system, with highest levels in spinal cord.

Its subcellular location is the cell membrane. It localises to the cell projection. The protein resides in the growth cone. Functionally, may be involved in neurite outgrowth. The sequence is that of G protein-regulated inducer of neurite outgrowth 1 (GPRIN1) from Homo sapiens (Human).